Consider the following 151-residue polypeptide: Ribosome maturation factor RimP (151 aa).

This sequence belongs to the RimP family.

The protein resides in the cytoplasm. In terms of biological role, required for maturation of 30S ribosomal subunits. This Shewanella baltica (strain OS223) protein is Ribosome maturation factor RimP.